The chain runs to 240 residues: Ribosomal RNA large subunit methyltransferase E (240 aa).

A compositionally biased stretch (gly residues) spans 1 to 20 (MSKAGGNKGGSRTGGRGGAG). The interval 1 to 33 (MSKAGGNKGGSRTGGRGGAGSSNLHVRVKKKAG) is disordered. Residues Gly92, Trp94, Asp115, Asp131, and Asp155 each contribute to the S-adenosyl-L-methionine site. Lys195 serves as the catalytic Proton acceptor.

This sequence belongs to the class I-like SAM-binding methyltransferase superfamily. RNA methyltransferase RlmE family.

The protein resides in the cytoplasm. The catalysed reaction is uridine(2552) in 23S rRNA + S-adenosyl-L-methionine = 2'-O-methyluridine(2552) in 23S rRNA + S-adenosyl-L-homocysteine + H(+). Functionally, specifically methylates the uridine in position 2552 of 23S rRNA at the 2'-O position of the ribose in the fully assembled 50S ribosomal subunit. This Brucella abortus (strain S19) protein is Ribosomal RNA large subunit methyltransferase E.